A 542-amino-acid chain; its full sequence is Chaperonin GroEL 2 (542 aa).

ATP-binding positions include 30 to 33 (TLGP), K51, 87 to 91 (DGTTT), G415, and D496.

It belongs to the chaperonin (HSP60) family. Forms a cylinder of 14 subunits composed of two heptameric rings stacked back-to-back. Interacts with the co-chaperonin GroES.

It is found in the cytoplasm. It catalyses the reaction ATP + H2O + a folded polypeptide = ADP + phosphate + an unfolded polypeptide.. Its function is as follows. Together with its co-chaperonin GroES, plays an essential role in assisting protein folding. The GroEL-GroES system forms a nano-cage that allows encapsulation of the non-native substrate proteins and provides a physical environment optimized to promote and accelerate protein folding. The sequence is that of Chaperonin GroEL 2 from Sinorhizobium fredii (strain NBRC 101917 / NGR234).